Consider the following 158-residue polypeptide: Transcription elongation factor GreA (158 aa).

This sequence belongs to the GreA/GreB family.

Functionally, necessary for efficient RNA polymerase transcription elongation past template-encoded arresting sites. The arresting sites in DNA have the property of trapping a certain fraction of elongating RNA polymerases that pass through, resulting in locked ternary complexes. Cleavage of the nascent transcript by cleavage factors such as GreA or GreB allows the resumption of elongation from the new 3'terminus. GreA releases sequences of 2 to 3 nucleotides. The sequence is that of Transcription elongation factor GreA from Rhizobium etli (strain CIAT 652).